We begin with the raw amino-acid sequence, 926 residues long: Eukaryotic translation initiation factor 3 subunit C (926 aa).

Disordered stretches follow at residues 1–27, 157–251, and 266–300; these read MSRF…PKAA, ASYK…NDGT, and EKAS…EEGG. The span at 200-210 shows a compositional bias: basic and acidic residues; it reads KPQEEEKKAPE. The segment covering 220-235 has biased composition (acidic residues); that stretch reads DEESESDDDEDSEDWA. Positions 274-283 are enriched in basic residues; that stretch reads DDRRRRHKKK. Acidic residues predominate over residues 287–299; sequence EEEAEEEGEAEEG. In terms of domain architecture, PCI spans 672-848; it reads FHMHINLELL…QTVVMHRTEP (177 aa). Residues 890 to 919 are compositionally biased toward low complexity; the sequence is GGYQQKQGYQRGDQKGGYQQKQNYQRGGYR. The segment at 890–926 is disordered; that stretch reads GGYQQKQGYQRGDQKGGYQQKQNYQRGGYRNQNQSSY.

This sequence belongs to the eIF-3 subunit C family. Component of the eukaryotic translation initiation factor 3 (eIF-3) complex, which is composed of 13 subunits: eif3a, eif3b, eif3c, eif3d, eif3e, eif3f, eif3g, eif3h, eif3i, eif3j, eif3k, eif3l and eif3m.

It localises to the cytoplasm. In terms of biological role, component of the eukaryotic translation initiation factor 3 (eIF-3) complex, which is involved in protein synthesis of a specialized repertoire of mRNAs and, together with other initiation factors, stimulates binding of mRNA and methionyl-tRNAi to the 40S ribosome. The eIF-3 complex specifically targets and initiates translation of a subset of mRNAs involved in cell proliferation. The chain is Eukaryotic translation initiation factor 3 subunit C (eif3c) from Danio rerio (Zebrafish).